Here is a 236-residue protein sequence, read N- to C-terminus: MATPHINAVEGAFAETMLFPGDPLRAKYIAETFLENVEQVTDVRNMLGFTGTYKGKRISVMGSGMGIPSCSIYATELIRDYGVKNLIRVGTCGAISTDVKVRDVIIGMGACTDSAVNRLRFKGQDFAAIANYELMNAVIESAKVRGTKIRVGNIFSADLFYTPDPQMFDVMEKMGVLGVEMEAAGLYGVAHEFGARALCVVTVSDHIRTGEKTSAEERQTTFNDMIIMTLEAAITL.

A purine D-ribonucleoside is bound at residue His-5. Phosphate-binding positions include Gly-21, Arg-25, Arg-44, and 88–91; that span reads RVGT. A purine D-ribonucleoside contacts are provided by residues 180–182 and 204–205; these read EME and SD. The Proton donor role is filled by Asp-205.

It belongs to the PNP/UDP phosphorylase family. As to quaternary structure, homohexamer; trimer of homodimers.

The enzyme catalyses a purine D-ribonucleoside + phosphate = a purine nucleobase + alpha-D-ribose 1-phosphate. It carries out the reaction a purine 2'-deoxy-D-ribonucleoside + phosphate = a purine nucleobase + 2-deoxy-alpha-D-ribose 1-phosphate. In terms of biological role, catalyzes the reversible phosphorolytic breakdown of the N-glycosidic bond in the beta-(deoxy)ribonucleoside molecules, with the formation of the corresponding free purine bases and pentose-1-phosphate. The chain is Purine nucleoside phosphorylase DeoD-type from Shewanella baltica (strain OS223).